We begin with the raw amino-acid sequence, 314 residues long: MMRTIKVGSRRSKLAMTQTKWVIQKLKEINPSFAFEIKEIVTKGDRIVDVTLSKVGGKGLFVKEIEQALLNEEIDMAVHSMKDMPAVLPEGLVIGCIPEREDPRDALISKNRVKLSEMKKGAVIGTSSLRRSAQLLIERPDLTIKWIRGNIDTRLQKLETEDYDAIILAAAGLSRMGWKQDVVTEFLEPERCLPAVGQGALAIECRESDEELLALFSQFTDEYTKRTVLAERAFLNAMEGGCQVPIAGYSVLNGQDEIEMTGLVASPDGKIIFKETVTGNDPEEVGKRCAALMADKGAKDLIDRVKRELDEDGK.

Residue Cys-242 is modified to S-(dipyrrolylmethanemethyl)cysteine.

Belongs to the HMBS family. Monomer. Dipyrromethane is required as a cofactor.

The catalysed reaction is 4 porphobilinogen + H2O = hydroxymethylbilane + 4 NH4(+). Its pathway is porphyrin-containing compound metabolism; protoporphyrin-IX biosynthesis; coproporphyrinogen-III from 5-aminolevulinate: step 2/4. Functionally, tetrapolymerization of the monopyrrole PBG into the hydroxymethylbilane pre-uroporphyrinogen in several discrete steps. The polypeptide is Porphobilinogen deaminase (hemC) (Bacillus subtilis (strain 168)).